Here is a 239-residue protein sequence, read N- to C-terminus: Adapter protein MecA (239 aa).

Positions 118–128 (EQRTKEKEAQG) are enriched in basic and acidic residues. The disordered stretch occupies residues 118 to 137 (EQRTKEKEAQGSKRQKSSAR).

This sequence belongs to the MecA family. Homodimer.

Its function is as follows. Enables the recognition and targeting of unfolded and aggregated proteins to the ClpC protease or to other proteins involved in proteolysis. The chain is Adapter protein MecA from Staphylococcus aureus (strain COL).